Here is a 95-residue protein sequence, read N- to C-terminus: uncharacterized protein (95 aa).

This is an uncharacterized protein from Bacillus subtilis (strain 168).